Reading from the N-terminus, the 457-residue chain is tRNA modification GTPase MnmE (457 aa).

3 residues coordinate (6S)-5-formyl-5,6,7,8-tetrahydrofolate: Arg-23, Glu-85, and Arg-124. One can recognise a TrmE-type G domain in the interval 220-376 (GALVVLAGQV…LVTAIRAAVL (157 aa)). Asn-230 is a binding site for K(+). Residues 230–235 (NAGKSS), 249–255 (TDLPGTT), and 274–277 (DTAG) each bind GTP. Ser-234 is a binding site for Mg(2+). K(+)-binding residues include Thr-249, Leu-251, and Thr-254. Position 255 (Thr-255) interacts with Mg(2+). A (6S)-5-formyl-5,6,7,8-tetrahydrofolate-binding site is contributed by Lys-457.

It belongs to the TRAFAC class TrmE-Era-EngA-EngB-Septin-like GTPase superfamily. TrmE GTPase family. As to quaternary structure, homodimer. Heterotetramer of two MnmE and two MnmG subunits. K(+) serves as cofactor.

The protein localises to the cytoplasm. Its function is as follows. Exhibits a very high intrinsic GTPase hydrolysis rate. Involved in the addition of a carboxymethylaminomethyl (cmnm) group at the wobble position (U34) of certain tRNAs, forming tRNA-cmnm(5)s(2)U34. The chain is tRNA modification GTPase MnmE from Nitratidesulfovibrio vulgaris (strain DP4) (Desulfovibrio vulgaris).